Reading from the N-terminus, the 261-residue chain is Thioesterase AMT4 (261 aa).

This sequence belongs to the AMT4 thioesterase family.

It participates in mycotoxin biosynthesis. Functionally, thioesterase; part of the gene clusters that mediate the biosynthesis of AM-toxins, host-selective toxins (HSTs) causing Alternaria blotch on apple, a worldwide distributed disease. AM-toxins are cyclic depsipeptides containing the 3 residues 2-hydroxy-isovaleric acid (2-HIV), dehydroalanine, L-alanine which are common for all 3 AM-toxins I to III. The fourth precursor is L-alpha-amino-methoxyphenyl-valeric acid (L-Amv) for AM-toxin I, L-alpha-amino-phenyl-valeric acid (L-Apv) for AM-toxin II, and L-alpha-amino-hydroxyphenyl-valeric acid (L-Ahv) for AM-toxin III. AM-toxins have two target sites for affecting susceptible apple cells; they cause invagination of the plasma membrane and electrolyte loss and chloroplast disorganization. The non-ribosomal peptide synthetase AMT1 contains 4 catalytic modules and is responsible for activation of each residue in AM-toxin. The aldo-keto reductase AMT2 catalyzes the conversion of 2-keto-isovaleric acid (2-KIV) to 2-hydroxy-isovaleric acid (2-HIV), one of the precursor residues incorporated by AMT1 during AM-toxin biosynthesis, by reduction of its ketone to an alcohol. The cytochrome P450 monooxygenase AMT3 and the thioesterase AMT4 are also important for AM-toxin production, but their exact function within the AM-toxin biosynthesis are not known yet. Up to 21 proteins (including AMT1 to AMT4) are predicted to be involved in AM-toxin biosynthesis since their expression ishighly up-regulated in AM-toxin-producing cultures. The sequence is that of Thioesterase AMT4 from Alternaria alternata (Alternaria rot fungus).